The sequence spans 405 residues: Acetylornithine/succinyldiaminopimelate aminotransferase (405 aa).

Pyridoxal 5'-phosphate is bound by residues Gly108–Thr109 and Phe141. Arg144 is a binding site for N(2)-acetyl-L-ornithine. Asp226 to Gln229 provides a ligand contact to pyridoxal 5'-phosphate. Lys255 is modified (N6-(pyridoxal phosphate)lysine). Ser283 contacts N(2)-acetyl-L-ornithine. Pyridoxal 5'-phosphate is bound at residue Thr284.

It belongs to the class-III pyridoxal-phosphate-dependent aminotransferase family. ArgD subfamily. In terms of assembly, homodimer. Pyridoxal 5'-phosphate serves as cofactor.

The protein localises to the cytoplasm. The catalysed reaction is N(2)-acetyl-L-ornithine + 2-oxoglutarate = N-acetyl-L-glutamate 5-semialdehyde + L-glutamate. The enzyme catalyses N-succinyl-(2S,6S)-2,6-diaminopimelate + 2-oxoglutarate = (S)-2-succinylamino-6-oxoheptanedioate + L-glutamate. It participates in amino-acid biosynthesis; L-arginine biosynthesis; N(2)-acetyl-L-ornithine from L-glutamate: step 4/4. Its pathway is amino-acid biosynthesis; L-lysine biosynthesis via DAP pathway; LL-2,6-diaminopimelate from (S)-tetrahydrodipicolinate (succinylase route): step 2/3. Functionally, involved in both the arginine and lysine biosynthetic pathways. The sequence is that of Acetylornithine/succinyldiaminopimelate aminotransferase from Salmonella typhi.